The sequence spans 286 residues: Translocon-associated protein subunit alpha (286 aa).

The first 18 residues, 1 to 18 (MRLLPRLLLLLLLVFPAT), serve as a signal peptide directing secretion. The Lumenal portion of the chain corresponds to 19 to 207 (VLFRGGPRGL…EREDGLDGET (189 aa)). Residues 39-75 (EETVEDSIIEDEDDEAEVEEDEPTDLVEDKEEEDVSG) show a composition bias toward acidic residues. The segment at 39–83 (EETVEDSIIEDEDDEAEVEEDEPTDLVEDKEEEDVSGEPEASPSA) is disordered. N-linked (GlcNAc...) asparagine glycosylation is found at Asn136 and Asn191. Residues 208–228 (IFMYMFLAGLGLLVIVGLHQL) form a helical membrane-spanning segment. Residues 229-286 (LESRKRKRPIQKVEMGTSSQNDVDMSWIPQETLNQINKASPRRLPRKRAQKRSVGSDE) are Cytoplasmic-facing. Residue Ser247 is modified to Phosphoserine. The residue at position 260 (Thr260) is a Phosphothreonine. The disordered stretch occupies residues 261–286 (LNQINKASPRRLPRKRAQKRSVGSDE). Ser268 is subject to Phosphoserine. A compositionally biased stretch (basic residues) spans 268-279 (SPRRLPRKRAQK).

Belongs to the TRAP-alpha family. Heterotetramer of TRAP-alpha, TRAP-beta, TRAP-delta and TRAP-gamma. Interacts with palmitoylated calnexin (CALX), the interaction is required for efficient folding of glycosylated proteins.

The protein resides in the endoplasmic reticulum membrane. In terms of biological role, TRAP proteins are part of a complex whose function is to bind calcium to the ER membrane and thereby regulate the retention of ER resident proteins. May be involved in the recycling of the translocation apparatus after completion of the translocation process or may function as a membrane-bound chaperone facilitating folding of translocated proteins. The chain is Translocon-associated protein subunit alpha (SSR1) from Homo sapiens (Human).